A 555-amino-acid chain; its full sequence is Protein NRT1/ PTR FAMILY 5.12 (555 aa).

The next 2 membrane-spanning stretches (helical) occupy residues 53–73 (FAYF…LGES) and 83–103 (LWLG…DSFL). T108 is modified (phosphothreonine). The next 10 helical transmembrane spans lie at 109 to 129 (ILLT…SATI), 148 to 168 (VIIF…FKVC), 190 to 210 (SYFN…RLVT), 221 to 241 (LGYA…LLGI), 315 to 335 (AVLS…VFAQ), 357 to 377 (VPAA…IPIY), 401 to 421 (ISTG…VEMK), 443 to 463 (VCWL…TMVG), 482 to 502 (ALYL…VSVI), and 526 to 546 (YFYW…VYFA).

This sequence belongs to the major facilitator superfamily. Proton-dependent oligopeptide transporter (POT/PTR) (TC 2.A.17) family. Expressed in shoots and roots.

Its subcellular location is the membrane. The polypeptide is Protein NRT1/ PTR FAMILY 5.12 (NPF5.12) (Arabidopsis thaliana (Mouse-ear cress)).